The chain runs to 245 residues: tRNA1(Val) (adenine(37)-N6)-methyltransferase (245 aa).

It belongs to the methyltransferase superfamily. tRNA (adenine-N(6)-)-methyltransferase family.

It is found in the cytoplasm. The catalysed reaction is adenosine(37) in tRNA1(Val) + S-adenosyl-L-methionine = N(6)-methyladenosine(37) in tRNA1(Val) + S-adenosyl-L-homocysteine + H(+). In terms of biological role, specifically methylates the adenine in position 37 of tRNA(1)(Val) (anticodon cmo5UAC). The protein is tRNA1(Val) (adenine(37)-N6)-methyltransferase of Salmonella enteritidis PT4 (strain P125109).